Here is a 432-residue protein sequence, read N- to C-terminus: Homogentisate 1,2-dioxygenase (432 aa).

Fe cation is bound by residues histidine 333, glutamate 339, and histidine 369.

This sequence belongs to the homogentisate dioxygenase family. It depends on Fe cation as a cofactor.

The enzyme catalyses homogentisate + O2 = 4-maleylacetoacetate + H(+). Its pathway is amino-acid degradation; L-phenylalanine degradation; acetoacetate and fumarate from L-phenylalanine: step 4/6. The sequence is that of Homogentisate 1,2-dioxygenase (hgd) from Dictyostelium discoideum (Social amoeba).